Reading from the N-terminus, the 467-residue chain is DNA polymerase IV (467 aa).

The region spanning 5–187 (VLHIDMDAFF…LPVGALWGVG (183 aa)) is the UmuC domain. 2 residues coordinate Mg(2+): D9 and D104. Residue E105 is part of the active site. 2 disordered regions span residues 364–383 (PDTD…STQV) and 429–449 (KGRT…DPLD).

This sequence belongs to the DNA polymerase type-Y family. In terms of assembly, monomer. Mg(2+) is required as a cofactor.

The protein localises to the cytoplasm. The catalysed reaction is DNA(n) + a 2'-deoxyribonucleoside 5'-triphosphate = DNA(n+1) + diphosphate. In terms of biological role, poorly processive, error-prone DNA polymerase involved in untargeted mutagenesis. Copies undamaged DNA at stalled replication forks, which arise in vivo from mismatched or misaligned primer ends. These misaligned primers can be extended by PolIV. Exhibits no 3'-5' exonuclease (proofreading) activity. May be involved in translesional synthesis, in conjunction with the beta clamp from PolIII. The sequence is that of DNA polymerase IV from Corynebacterium glutamicum (strain ATCC 13032 / DSM 20300 / JCM 1318 / BCRC 11384 / CCUG 27702 / LMG 3730 / NBRC 12168 / NCIMB 10025 / NRRL B-2784 / 534).